The following is a 366-amino-acid chain: 1-aminocyclopropane-1-carboxylate oxidase homolog 12 (366 aa).

The Fe2OG dioxygenase domain occupies Lys215–Ser314. Residues His239, Asp241, and His295 each contribute to the Fe cation site. Residue Arg305 coordinates 2-oxoglutarate.

Belongs to the iron/ascorbate-dependent oxidoreductase family. Fe(2+) is required as a cofactor.

This is 1-aminocyclopropane-1-carboxylate oxidase homolog 12 from Arabidopsis thaliana (Mouse-ear cress).